A 544-amino-acid polypeptide reads, in one-letter code: Hydroxylamine reductase (544 aa).

Residues cysteine 3, cysteine 6, cysteine 15, and cysteine 21 each contribute to the [4Fe-4S] cluster site. Residues histidine 244, glutamate 268, cysteine 313, cysteine 400, cysteine 428, cysteine 453, glutamate 487, and lysine 489 each coordinate hybrid [4Fe-2O-2S] cluster. Cysteine 400 carries the cysteine persulfide modification.

It belongs to the HCP family. [4Fe-4S] cluster serves as cofactor. Requires hybrid [4Fe-2O-2S] cluster as cofactor.

Its subcellular location is the cytoplasm. It carries out the reaction A + NH4(+) + H2O = hydroxylamine + AH2 + H(+). In terms of biological role, catalyzes the reduction of hydroxylamine to form NH(3) and H(2)O. In Trichormus variabilis (strain ATCC 29413 / PCC 7937) (Anabaena variabilis), this protein is Hydroxylamine reductase.